Here is a 340-residue protein sequence, read N- to C-terminus: MTNKNAYAQSGVDVEAGYEVVERIKKHVARTERAGVMGALGGFGGMFDLSKTGVKEPVLISGTDGVGTKLMLAIKYDKHDTIGQDCVAMCVNDIIAAGAEPLYFLDYVATGKNEPAKLEQVVAGVAEGCVQAGAALIGGETAEMPGMYGEDDYDLAGFAVGVAEKSQIIDGSKVAEGDVLLGLASSGIHSNGYSLVRRVFADYTGEEVLPELEGKKLKEVLLEPTRIYVKAVLPLIKEELVNGIAHITGGGFIENVPRMFADDLAAEIEESKVPVLPIFKALEKYGEIKHEEMFEIFNMGVGLMLAVSPENVGRVKELLDEPVYEIGRIVKKENESVIIK.

This sequence belongs to the AIR synthase family.

The protein localises to the cytoplasm. It carries out the reaction 2-formamido-N(1)-(5-O-phospho-beta-D-ribosyl)acetamidine + ATP = 5-amino-1-(5-phospho-beta-D-ribosyl)imidazole + ADP + phosphate + H(+). It functions in the pathway purine metabolism; IMP biosynthesis via de novo pathway; 5-amino-1-(5-phospho-D-ribosyl)imidazole from N(2)-formyl-N(1)-(5-phospho-D-ribosyl)glycinamide: step 2/2. The sequence is that of Phosphoribosylformylglycinamidine cyclo-ligase from Streptococcus gordonii (strain Challis / ATCC 35105 / BCRC 15272 / CH1 / DL1 / V288).